The chain runs to 1210 residues: Epidermal growth factor receptor (1210 aa).

Positions 1 to 24 (MRPSGTAGAALLALLAALCPASRA) are cleaved as a signal peptide. The Extracellular segment spans residues 25-645 (LEEKKVCQGT…CARNGPKIPS (621 aa)). A disulfide bond links C31 and C58. An Approximate repeat occupies 75 to 300 (DLSFLKTIQE…CVKKCPRNYV (226 aa)). N-linked (GlcNAc...) asparagine glycans are attached at residues N128, N175, and N196. Cystine bridges form between C157–C187, C190–C199, C194–C207, C215–C223, C219–C231, C232–C240, C236–C248, C251–C260, C264–C291, C295–C307, C311–C326, C329–C333, and C337–C362. S229 bears the Phosphoserine mark. 4 N-linked (GlcNAc...) asparagine glycosylation sites follow: N352, N361, N413, and N444. The stretch at 390–600 (QELDILKTVK…CVKTCPAGVM (211 aa)) is one Approximate repeat. Disulfide bonds link C470/C499, C506/C515, C510/C523, C526/C535, C539/C555, C558/C571, C562/C579, C582/C591, C595/C617, C620/C628, and C624/C636. N-linked (GlcNAc...) asparagine glycosylation is present at N528. Residue N568 is glycosylated (N-linked (GlcNAc...) asparagine). Residue N603 is glycosylated (N-linked (GlcNAc...) asparagine). Residues 646–668 (IATGMVGALLLLLVVALGIGLFM) traverse the membrane as a helical segment. Residues 669 to 1210 (RRRHIVRKRT…APQSSEFIGA (542 aa)) lie on the Cytoplasmic side of the membrane. Phosphothreonine; by PKC and PKD/PRKD1 is present on T678. Residues 688–704 (LVEPLTPSGEAPNQALL) form an important for dimerization, phosphorylation and activation region. T693 bears the Phosphothreonine; by PKD/PRKD1 mark. Phosphoserine is present on S695. One can recognise a Protein kinase domain in the interval 712–979 (FKKIKVLGSG…KMARDPQRYL (268 aa)). K716 is covalently cross-linked (Glycyl lysine isopeptide (Lys-Gly) (interchain with G-Cter in ubiquitin)). 718 to 726 (LGSGAFGTV) serves as a coordination point for ATP. K737 participates in a covalent cross-link: Glycyl lysine isopeptide (Lys-Gly) (interchain with G-Cter in ubiquitin). K745 is a binding site for ATP. Position 745 is an N6-(2-hydroxyisobutyryl)lysine (K745). Residues K754 and K757 each participate in a glycyl lysine isopeptide (Lys-Gly) (interchain with G-Cter in ubiquitin) cross-link. ATP is bound at residue 790–791 (TQ). D837 (proton acceptor) is an active-site residue. D855 is an ATP binding site. Residue K867 forms a Glycyl lysine isopeptide (Lys-Gly) (interchain with G-Cter in ubiquitin) linkage. Y869 bears the Phosphotyrosine mark. Residues K929, K960, and K970 each participate in a glycyl lysine isopeptide (Lys-Gly) (interchain with G-Cter in ubiquitin) cross-link. S991 and S995 each carry phosphoserine. Phosphotyrosine; by autocatalysis occurs at positions 998 and 1016. Phosphoserine is present on residues S1026 and S1039. Position 1041 is a phosphothreonine (T1041). Position 1042 is a phosphoserine (S1042). A lipid anchor (S-palmitoyl cysteine) is attached at C1049. S1064 is modified (phosphoserine). Y1069 is modified (phosphotyrosine). Phosphoserine is present on residues S1070, S1071, and S1081. 2 positions are modified to phosphotyrosine; by autocatalysis: Y1092 and Y1110. A disordered region spans residues 1097–1137 (VPKRPAGSVQNPVYHNQPLNPAPSRDPHYQDPHSTAVGNPE). Polar residues-rich tracts occupy residues 1104-1115 (SVQNPVYHNQPL) and 1128-1137 (PHSTAVGNPE). C1146 is lipidated: S-palmitoyl cysteine. Phosphoserine is present on S1166. Phosphotyrosine; by autocatalysis occurs at positions 1172 and 1197. R1199 carries the omega-N-methylarginine modification.

This sequence belongs to the protein kinase superfamily. Tyr protein kinase family. EGF receptor subfamily. In terms of assembly, binding of the ligand triggers homo- and/or heterodimerization of the receptor triggering its autophosphorylation. Heterodimer with ERBB2. Forms a complex with CCDC88A/GIV (via SH2-like regions) and GNAI3 which leads to enhanced EGFR signaling and triggering of cell migration; binding to CCDC88A requires autophosphorylation of the EGFR C-terminal region, and ligand stimulation is required for recruitment of GNAI3 to the complex. Interacts with ERRFI1; inhibits dimerization of the kinase domain and autophosphorylation. Part of a complex with ERBB2 and either PIK3C2A or PIK3C2B. Interacts with GRB2; an adapter protein coupling the receptor to downstream signaling pathways. Interacts with GAB2; involved in signaling downstream of EGFR. Interacts with STAT3; mediates EGFR downstream signaling in cell proliferation. Interacts with RIPK1; involved in NF-kappa-B activation. Interacts (autophosphorylated) with CBL, CBLB and CBLC; involved in EGFR ubiquitination and regulation; interaction with CBL is reduced in the presence of tensin TNS4. Interacts with SOCS5; regulates EGFR degradation through ELOC- and ELOB-mediated ubiquitination and proteasomal degradation. Interacts with PRMT5; methylates EGFR and enhances interaction with PTPN6. Interacts (phosphorylated) with PTPN6; inhibits EGFR-dependent activation of MAPK/ERK. Interacts with COPG1; essential for regulation of EGF-dependent nuclear transport of EGFR by retrograde trafficking from the Golgi to the ER. Interacts with TNK2; this interaction is dependent on EGF stimulation and kinase activity of EGFR. Interacts with PCNA; positively regulates PCNA. Interacts with PELP1. Interacts with MUC1. Interacts with AP2M1. Interacts with FER. May interact with EPS8; mediates EPS8 phosphorylation. Interacts (via SH2 domains) with GRB2, NCK1 and NCK2. Interacts with ATXN2. Interacts with GAREM1. Interacts (ubiquitinated) with ANKRD13A/B/D; the interaction is direct and may regulate EGFR internalization after EGF stimulation. Interacts with GPER1; the interaction occurs in an estrogen-dependent manner. Interacts (via C-terminal cytoplasmic kinase domain) with ZPR1 (via zinc fingers). Interacts with RNF115 and RNF126. Interacts with GPRC5A (via its transmembrane domain). Interacts with FAM83B; positively regulates EGFR inducing its autophosphorylation in absence of stimulation by EGF. Interacts with LAPTM4B; positively correlates with EGFR activation. Interacts with STX19. Interacts with CD44. Interacts with PGRMC1; the interaction requires PGRMC1 homodimerization. Interacts with PIKFYVE. Interacts with NEU3. Interacts with TRAF4. Interacts with the ant venom OMEGA-myrmeciitoxin(02)-Mg1a. Interacts with CD82; this interaction facilitates ligand-induced endocytosis of the receptor and its subsequent desensitization. Post-translationally, phosphorylated on Tyr residues in response to EGF. Phosphorylation at Ser-695 is partial and occurs only if Thr-693 is phosphorylated. Phosphorylation at Thr-678 and Thr-693 by PRKD1 inhibits EGF-induced MAPK8/JNK1 activation. Dephosphorylation by PTPRJ prevents endocytosis and stabilizes the receptor at the plasma membrane. Autophosphorylation at Tyr-1197 is stimulated by methylation at Arg-1199 and enhances interaction with PTPN6. Autophosphorylation at Tyr-1092 and/or Tyr-1110 recruits STAT3. Dephosphorylated by PTPN1 and PTPN2. In terms of processing, monoubiquitinated and polyubiquitinated upon EGF stimulation; which does not affect tyrosine kinase activity or signaling capacity but may play a role in lysosomal targeting. Polyubiquitin linkage is mainly through 'Lys-63', but linkage through 'Lys-48', 'Lys-11' and 'Lys-29' also occurs. Deubiquitination by OTUD7B prevents degradation. Ubiquitinated by RNF115 and RNF126. Ubiquitinated by ZNRF1 or CBL at different lysines in response to EGF stimulation; leading to recruitment of the ESCRT machinery and subsequent degradation in the lysosomes. Deubiquitinated by UCHL1 leading to the inhibition of its degradation. Palmitoylated on Cys residues by ZDHHC20. Palmitoylation inhibits internalization after ligand binding, and increases the persistence of tyrosine-phosphorylated EGFR at the cell membrane. Palmitoylation increases the amplitude and duration of EGFR signaling. Post-translationally, methylated. Methylation at Arg-1199 by PRMT5 stimulates phosphorylation at Tyr-1197. Hypothalamus.

Its subcellular location is the cell membrane. The protein localises to the endoplasmic reticulum membrane. It localises to the golgi apparatus membrane. The protein resides in the nucleus membrane. It is found in the endosome. Its subcellular location is the endosome membrane. The protein localises to the nucleus. The enzyme catalyses L-tyrosyl-[protein] + ATP = O-phospho-L-tyrosyl-[protein] + ADP + H(+). Endocytosis and inhibition of the activated EGFR by phosphatases like PTPRJ and PTPRK constitute immediate regulatory mechanisms. Upon EGF-binding phosphorylates EPS15 that regulates EGFR endocytosis and activity. Moreover, inducible feedback inhibitors including LRIG1, SOCS4, SOCS5 and ERRFI1 constitute alternative regulatory mechanisms for the EGFR signaling. Its function is as follows. Receptor tyrosine kinase binding ligands of the EGF family and activating several signaling cascades to convert extracellular cues into appropriate cellular responses. Known ligands include EGF, TGFA/TGF-alpha, AREG, epigen/EPGN, BTC/betacellulin, epiregulin/EREG and HBEGF/heparin-binding EGF. Ligand binding triggers receptor homo- and/or heterodimerization and autophosphorylation on key cytoplasmic residues. The phosphorylated receptor recruits adapter proteins like GRB2 which in turn activates complex downstream signaling cascades. Activates at least 4 major downstream signaling cascades including the RAS-RAF-MEK-ERK, PI3 kinase-AKT, PLCgamma-PKC and STATs modules. May also activate the NF-kappa-B signaling cascade. Also directly phosphorylates other proteins like RGS16, activating its GTPase activity and probably coupling the EGF receptor signaling to the G protein-coupled receptor signaling. Also phosphorylates MUC1 and increases its interaction with SRC and CTNNB1/beta-catenin. Positively regulates cell migration via interaction with CCDC88A/GIV which retains EGFR at the cell membrane following ligand stimulation, promoting EGFR signaling which triggers cell migration. Plays a role in enhancing learning and memory performance. Plays a role in mammalian pain signaling (long-lasting hypersensitivity). The chain is Epidermal growth factor receptor (EGFR) from Macaca mulatta (Rhesus macaque).